Consider the following 72-residue polypeptide: uncharacterized protein (72 aa).

Residues 52–72 (KGGRQRDEAVGVEELCKQHKE) are disordered. Basic and acidic residues predominate over residues 55–72 (RQRDEAVGVEELCKQHKE).

Belongs to the YiiE family.

This is an uncharacterized protein from Escherichia coli O6:H1 (strain CFT073 / ATCC 700928 / UPEC).